Here is a 505-residue protein sequence, read N- to C-terminus: ATP synthase subunit alpha (505 aa).

170–177 contacts ATP; sequence GDRQTGKS.

Belongs to the ATPase alpha/beta chains family. In terms of assembly, F-type ATPases have 2 components, CF(1) - the catalytic core - and CF(0) - the membrane proton channel. CF(1) has five subunits: alpha(3), beta(3), gamma(1), delta(1), epsilon(1). CF(0) has four main subunits: a(1), b(1), b'(1) and c(9-12).

The protein resides in the cellular thylakoid membrane. The enzyme catalyses ATP + H2O + 4 H(+)(in) = ADP + phosphate + 5 H(+)(out). Produces ATP from ADP in the presence of a proton gradient across the membrane. The alpha chain is a regulatory subunit. This chain is ATP synthase subunit alpha, found in Prochlorococcus marinus (strain AS9601).